The following is a 229-amino-acid chain: Small ribosomal subunit protein uS3 (229 aa).

Residues V39–R107 enclose the KH type-2 domain.

This sequence belongs to the universal ribosomal protein uS3 family. In terms of assembly, part of the 30S ribosomal subunit. Forms a tight complex with proteins S10 and S14.

Its function is as follows. Binds the lower part of the 30S subunit head. Binds mRNA in the 70S ribosome, positioning it for translation. This Photobacterium profundum (strain SS9) protein is Small ribosomal subunit protein uS3.